A 567-amino-acid polypeptide reads, in one-letter code: Urease subunit alpha (567 aa).

Residues glycine 130–phenylalanine 567 form the Urease domain. 3 residues coordinate Ni(2+): histidine 135, histidine 137, and lysine 218. The residue at position 218 (lysine 218) is an N6-carboxylysine. Position 220 (histidine 220) interacts with substrate. Positions 247 and 273 each coordinate Ni(2+). Histidine 321 functions as the Proton donor in the catalytic mechanism. Aspartate 361 contributes to the Ni(2+) binding site.

Belongs to the metallo-dependent hydrolases superfamily. Urease alpha subunit family. Heterotrimer of UreA (gamma), UreB (beta) and UreC (alpha) subunits. Three heterotrimers associate to form the active enzyme. The cofactor is Ni cation. Carboxylation allows a single lysine to coordinate two nickel ions.

It is found in the cytoplasm. It catalyses the reaction urea + 2 H2O + H(+) = hydrogencarbonate + 2 NH4(+). The protein operates within nitrogen metabolism; urea degradation; CO(2) and NH(3) from urea (urease route): step 1/1. The chain is Urease subunit alpha from Methylobacillus flagellatus (strain ATCC 51484 / DSM 6875 / VKM B-1610 / KT).